The primary structure comprises 697 residues: tRNA 5-methylaminomethyl-2-thiouridine biosynthesis bifunctional protein MnmC (697 aa).

The segment at 1–269 is tRNA (mnm(5)s(2)U34)-methyltransferase; that stretch reads MNKTPLLSVS…LRQQLQQQFA (269 aa). The interval 287 to 697 is FAD-dependent cmnm(5)s(2)U34 oxidoreductase; sequence IGGGIASASL…RKLLKGKALM (411 aa).

It in the N-terminal section; belongs to the methyltransferase superfamily. tRNA (mnm(5)s(2)U34)-methyltransferase family. The protein in the C-terminal section; belongs to the DAO family. Requires FAD as cofactor.

The protein resides in the cytoplasm. The catalysed reaction is 5-aminomethyl-2-thiouridine(34) in tRNA + S-adenosyl-L-methionine = 5-methylaminomethyl-2-thiouridine(34) in tRNA + S-adenosyl-L-homocysteine + H(+). Catalyzes the last two steps in the biosynthesis of 5-methylaminomethyl-2-thiouridine (mnm(5)s(2)U) at the wobble position (U34) in tRNA. Catalyzes the FAD-dependent demodification of cmnm(5)s(2)U34 to nm(5)s(2)U34, followed by the transfer of a methyl group from S-adenosyl-L-methionine to nm(5)s(2)U34, to form mnm(5)s(2)U34. The chain is tRNA 5-methylaminomethyl-2-thiouridine biosynthesis bifunctional protein MnmC from Shewanella frigidimarina (strain NCIMB 400).